The sequence spans 459 residues: SLIT-ROBO Rho GTPase-activating protein 2C (459 aa).

One can recognise an F-BAR domain in the interval 22-325 (KEIRAQLTEQ…AVENLDATSD (304 aa)). Basic and acidic residues predominate over residues 181–202 (LKEAEKQEEKQIGKSVKQEDRQ). Residues 181-211 (LKEAEKQEEKQIGKSVKQEDRQTPCSPDSTA) form a disordered region. A coiled-coil region spans residues 363 to 401 (QSELVQRCQQLQSRLSTLKIENEEVKKTMEATLQTIQDI).

Homodimer. Interacts (via F-BAR domain) with SRGAP2/SRGAP2A (via F-BAR domain); formation of the heterodimer inhibits SRGAP2/SRGAP2A function. As to expression, ubiquitously expressed with higher expression in cerebellum. Probably expressed in fetal and adult neurons (at protein level).

Functionally, human-specific protein that acts as a key modifier of cortical connectivity in the human brain. Acts by inhibiting the functions of ancestral paralog SRGAP2/SRGAP2A, a postsynaptic protein that regulates excitatory and inhibitory synapse maturation and density in cortical pyramidal neurons. SRGAP2C is unstable but is able to heterodimerize with SRGAP2/SRGAP2A, thereby reducing SRGAP2/SRGAP2A levels through proteasome-dependent degradation. Inhibition of SRGAP2/SRGAP2A by SRGAP2C leads to an increase in synaptic density and protracted synaptic maturation of both excitatory and inhibitory synapses. Modifies cortical circuit connectivity by increasing the number of local and long-range cortical inputs received by layer 2/3 pyramidal neurons. Also able to increase the probability of sensory-evoked responses by layer 2/3 pyramidal neurons. The sequence is that of SLIT-ROBO Rho GTPase-activating protein 2C from Homo sapiens (Human).